The primary structure comprises 134 residues: DNA-directed RNA polymerase subunit omega (134 aa).

The protein belongs to the RNA polymerase subunit omega family. In terms of assembly, the RNAP catalytic core consists of 2 alpha, 1 beta, 1 beta' and 1 omega subunit. When a sigma factor is associated with the core the holoenzyme is formed, which can initiate transcription.

The catalysed reaction is RNA(n) + a ribonucleoside 5'-triphosphate = RNA(n+1) + diphosphate. Functionally, promotes RNA polymerase assembly. Latches the N- and C-terminal regions of the beta' subunit thereby facilitating its interaction with the beta and alpha subunits. This Rhizobium etli (strain CIAT 652) protein is DNA-directed RNA polymerase subunit omega.